Consider the following 484-residue polypeptide: Protein nucleotidyltransferase YdiU (484 aa).

Residues Gly-87, Gly-89, Arg-90, Lys-110, Asp-122, Gly-123, Arg-173, and Arg-180 each coordinate ATP. Residue Asp-249 is the Proton acceptor of the active site. Asn-250 and Asp-259 together coordinate Mg(2+). An ATP-binding site is contributed by Asp-259.

It belongs to the SELO family. Requires Mg(2+) as cofactor. Mn(2+) is required as a cofactor.

The catalysed reaction is L-seryl-[protein] + ATP = 3-O-(5'-adenylyl)-L-seryl-[protein] + diphosphate. The enzyme catalyses L-threonyl-[protein] + ATP = 3-O-(5'-adenylyl)-L-threonyl-[protein] + diphosphate. It catalyses the reaction L-tyrosyl-[protein] + ATP = O-(5'-adenylyl)-L-tyrosyl-[protein] + diphosphate. It carries out the reaction L-histidyl-[protein] + UTP = N(tele)-(5'-uridylyl)-L-histidyl-[protein] + diphosphate. The catalysed reaction is L-seryl-[protein] + UTP = O-(5'-uridylyl)-L-seryl-[protein] + diphosphate. The enzyme catalyses L-tyrosyl-[protein] + UTP = O-(5'-uridylyl)-L-tyrosyl-[protein] + diphosphate. Its function is as follows. Nucleotidyltransferase involved in the post-translational modification of proteins. It can catalyze the addition of adenosine monophosphate (AMP) or uridine monophosphate (UMP) to a protein, resulting in modifications known as AMPylation and UMPylation. The polypeptide is Protein nucleotidyltransferase YdiU (Lachnoclostridium phytofermentans (strain ATCC 700394 / DSM 18823 / ISDg) (Clostridium phytofermentans)).